We begin with the raw amino-acid sequence, 160 residues long: Large ribosomal subunit protein uL30m (160 aa).

The transit peptide at 1 to 34 directs the protein to the mitochondrion; the sequence is MAGVLRSAFPRPPCRLQTVKKGAESLIGTEWIRH. Positions 44-64 are disordered; the sequence is KVFQPKPEDHEKYGGDPQNPH.

The protein belongs to the universal ribosomal protein uL30 family. In terms of assembly, component of the mitochondrial ribosome large subunit (39S) which comprises a 16S rRNA and about 50 distinct proteins.

The protein localises to the mitochondrion. The protein is Large ribosomal subunit protein uL30m (Mrpl30) of Mus musculus (Mouse).